We begin with the raw amino-acid sequence, 374 residues long: Quinolinate synthase (374 aa).

Positions 53 and 70 each coordinate iminosuccinate. Cys-116 provides a ligand contact to [4Fe-4S] cluster. Iminosuccinate-binding positions include 148-150 (YMN) and Ser-169. Residue Cys-236 participates in [4Fe-4S] cluster binding. Iminosuccinate-binding positions include 262–264 (HPE) and Thr-279. Cys-327 is a [4Fe-4S] cluster binding site.

It belongs to the quinolinate synthase family. Type 3 subfamily. [4Fe-4S] cluster is required as a cofactor.

It localises to the cytoplasm. The catalysed reaction is iminosuccinate + dihydroxyacetone phosphate = quinolinate + phosphate + 2 H2O + H(+). It participates in cofactor biosynthesis; NAD(+) biosynthesis; quinolinate from iminoaspartate: step 1/1. Catalyzes the condensation of iminoaspartate with dihydroxyacetone phosphate to form quinolinate. This is Quinolinate synthase from Halobacterium salinarum (strain ATCC 29341 / DSM 671 / R1).